The following is a 401-amino-acid chain: S-adenosylmethionine synthase (401 aa).

Residue histidine 16 participates in ATP binding. Position 18 (aspartate 18) interacts with Mg(2+). K(+) is bound at residue glutamate 44. 2 residues coordinate L-methionine: glutamate 57 and glutamine 109. The interval 109 to 119 (QSAHIAQGVDA) is flexible loop. ATP-binding positions include 174–176 (DAK), aspartate 251, 257–258 (RK), alanine 274, and lysine 278. Aspartate 251 lines the L-methionine pocket. Lysine 282 lines the L-methionine pocket.

The protein belongs to the AdoMet synthase family. As to quaternary structure, homotetramer; dimer of dimers. Mg(2+) is required as a cofactor. Requires K(+) as cofactor.

The protein localises to the cytoplasm. The catalysed reaction is L-methionine + ATP + H2O = S-adenosyl-L-methionine + phosphate + diphosphate. It participates in amino-acid biosynthesis; S-adenosyl-L-methionine biosynthesis; S-adenosyl-L-methionine from L-methionine: step 1/1. Functionally, catalyzes the formation of S-adenosylmethionine (AdoMet) from methionine and ATP. The overall synthetic reaction is composed of two sequential steps, AdoMet formation and the subsequent tripolyphosphate hydrolysis which occurs prior to release of AdoMet from the enzyme. The polypeptide is S-adenosylmethionine synthase (Novosphingobium aromaticivorans (strain ATCC 700278 / DSM 12444 / CCUG 56034 / CIP 105152 / NBRC 16084 / F199)).